The chain runs to 288 residues: Cyclin-dependent kinase 2 homolog (288 aa).

The Protein kinase domain maps to 4-284; it reads YHGLEKIGEG…AKEALQHAYF (281 aa). Residues 10 to 18 and Lys-32 contribute to the ATP site; that span reads IGEGTYGVV. At Thr-14 the chain carries Phosphothreonine. Tyr-15 is subject to Phosphotyrosine. Asp-125 acts as the Proton acceptor in catalysis. Thr-158 carries the post-translational modification Phosphothreonine.

The protein belongs to the protein kinase superfamily. CMGC Ser/Thr protein kinase family. CDC2/CDKX subfamily. In terms of assembly, may form a complex composed of at least the catalytic subunit CRK2 and a cyclin. Mg(2+) is required as a cofactor.

It is found in the cytoplasm. It catalyses the reaction L-seryl-[protein] + ATP = O-phospho-L-seryl-[protein] + ADP + H(+). The enzyme catalyses L-threonyl-[protein] + ATP = O-phospho-L-threonyl-[protein] + ADP + H(+). The catalysed reaction is [DNA-directed RNA polymerase] + ATP = phospho-[DNA-directed RNA polymerase] + ADP + H(+). Phosphorylation at Thr-14 or Tyr-15 inactivates the enzyme, while phosphorylation at Thr-158 activates it. In terms of biological role, serine/threonine-protein kinase. Involved in the control of the cell cycle. Required for entry into S-phase and mitosis. Probable component of the kinase complex that phosphorylates the repetitive C-terminus of RNA polymerase II. This is Cyclin-dependent kinase 2 homolog from Plasmodium knowlesi (strain H).